The following is a 492-amino-acid chain: NADH-ubiquinone oxidoreductase chain 4 (492 aa).

15 helical membrane-spanning segments follow: residues Leu-9–Ala-29, Asn-36–Phe-56, Phe-63–Ile-83, Ile-86–Trp-106, Asp-115–Asp-135, Leu-136–Val-156, Phe-170–Phe-190, Ile-211–His-231, Pro-242–Leu-262, Phe-269–Ile-289, Ile-304–Asn-324, Ile-332–Leu-352, Val-370–Gly-390, Thr-410–Phe-430, and Phe-454–Phe-474.

Belongs to the complex I subunit 4 family.

The protein localises to the mitochondrion membrane. It carries out the reaction a ubiquinone + NADH + 5 H(+)(in) = a ubiquinol + NAD(+) + 4 H(+)(out). Functionally, core subunit of the mitochondrial membrane respiratory chain NADH dehydrogenase (Complex I) that is believed to belong to the minimal assembly required for catalysis. Complex I functions in the transfer of electrons from NADH to the respiratory chain. The immediate electron acceptor for the enzyme is believed to be ubiquinone. The sequence is that of NADH-ubiquinone oxidoreductase chain 4 (ND4) from Chondrus crispus (Carrageen Irish moss).